The sequence spans 203 residues: E3 ubiquitin-protein ligase RNF152 (203 aa).

The RING-type zinc-finger motif lies at 12 to 55; that stretch reads CQICFNYYSPRRRPKLLDCKHTCCSVCLQQMRTSQKDVRCPWCR. Residues 106–165 form a necessary for interaction with RRAGA region; it reads ISKERTLLPGDMGCRLLPGSQQKSLTVVTIPAEQQPLQGGAPQEAVEEEPDRRGVAKSST. Residues 140-159 are disordered; the sequence is QPLQGGAPQEAVEEEPDRRG. The helical transmembrane segment at 167–187 threads the bilayer; the sequence is SGVCTVILVACVLVFLLGIVL.

It belongs to the RNF152 family. Interacts with RRAGA (inactive GDP-bound form); stimulated by amino acid starvation. Interacts with SEC16A. In terms of processing, ubiquitinated. Autoubiquitinated in vitro, leading to its degradation by the proteasome.

Its subcellular location is the lysosome membrane. The catalysed reaction is S-ubiquitinyl-[E2 ubiquitin-conjugating enzyme]-L-cysteine + [acceptor protein]-L-lysine = [E2 ubiquitin-conjugating enzyme]-L-cysteine + N(6)-ubiquitinyl-[acceptor protein]-L-lysine.. It functions in the pathway protein modification; protein ubiquitination. In terms of biological role, E3 ubiquitin-protein ligase that acts as a negative regulator of mTORC1 signaling by mediating ubiquitination of RagA/RRAGA and RHEB. Catalyzes 'Lys-63'-linked polyubiquitination of RagA/RRAGA in response to amino acid starvation, thereby regulating mTORC1 signaling. Also mediates monoubiquitination of RHEB, promoting its association with the TSC-TBC complex and subsequent inhibition. Also mediates 'Lys-48'-linked polyubiquitination of target proteins and their subsequent targeting to the proteasome for degradation. Induces apoptosis when overexpressed. The sequence is that of E3 ubiquitin-protein ligase RNF152 from Rattus norvegicus (Rat).